The sequence spans 111 residues: Class I hydrophobin SC4 (111 aa).

A signal peptide spans 1-25; that stretch reads MRFSLALLALPALAAAAPVPGGGKG. 4 disulfides stabilise this stretch: Cys-30–Cys-37, Cys-38–Cys-72, Cys-86–Cys-92, and Cys-93–Cys-106. Asn-39 is a glycosylation site (N-linked (GlcNAc...) asparagine).

It belongs to the fungal hydrophobin family. Self-assembles to form functional amyloid fibrils called rodlets. Self-assembly into fibrillar rodlets occurs spontaneously at hydrophobic:hydrophilic interfaces and the rodlets further associate laterally to form amphipathic monolayers.

The protein localises to the secreted. It localises to the cell wall. Functionally, aerial growth, conidiation, and dispersal of filamentous fungi in the environment rely upon a capability of their secreting small amphipathic proteins called hydrophobins (HPBs) with low sequence identity. Class I can self-assemble into an outermost layer of rodlet bundles on aerial cell surfaces, conferring cellular hydrophobicity that supports fungal growth, development and dispersal; whereas Class II form highly ordered films at water-air interfaces through intermolecular interactions but contribute nothing to the rodlet structure. SC4 is a dikaryon-specific class I hydrophobin that contributes to the formation of aerial hyphae and fruiting bodies. Plays a role within fruiting bodies by preventing gas channels filling with water under wet conditions, probably serving uninterrupted gas exchange. SC4 cannot fully substitute for SC3. Involved in the unusual characteristic of mounds to adhere to and completely envelop adjacent fruiting bodies on mosaic colonies. The polypeptide is Class I hydrophobin SC4 (Schizophyllum commune (Split gill fungus)).